The following is a 351-amino-acid chain: UDP-3-O-acylglucosamine N-acyltransferase (351 aa).

His240 acts as the Proton acceptor in catalysis.

The protein belongs to the transferase hexapeptide repeat family. LpxD subfamily. As to quaternary structure, homotrimer.

The enzyme catalyses a UDP-3-O-[(3R)-3-hydroxyacyl]-alpha-D-glucosamine + a (3R)-hydroxyacyl-[ACP] = a UDP-2-N,3-O-bis[(3R)-3-hydroxyacyl]-alpha-D-glucosamine + holo-[ACP] + H(+). It participates in bacterial outer membrane biogenesis; LPS lipid A biosynthesis. In terms of biological role, catalyzes the N-acylation of UDP-3-O-acylglucosamine using 3-hydroxyacyl-ACP as the acyl donor. Is involved in the biosynthesis of lipid A, a phosphorylated glycolipid that anchors the lipopolysaccharide to the outer membrane of the cell. In Pseudomonas entomophila (strain L48), this protein is UDP-3-O-acylglucosamine N-acyltransferase.